The primary structure comprises 218 residues: Oxidative stress regulator AosR (218 aa).

The CXXXC signature appears at 5 to 9; sequence CGRRC. Cysteine 5 and cysteine 9 are disulfide-bonded.

Belongs to the AosR family. As to quaternary structure, homodimer. Under oxidative stress, interacts with the extracytoplasmic-function (ECF) RNA polymerase sigma factor SigH.

Activity is modulated by the formation of a disulfide bound within the N-terminal Cys-X-X-X-Cys (CXXXC) motif. This intramolecular disulfide bond is formed in response to oxidative stress, and results in oxidative stress-dependent interaction with the sigma factor SigH. Transcription factor crucial for intra-mycobacterial redox homeostasis and protection against host-derived oxidative and nitrosative radicals. In response to oxidative stress, interacts with the ECF sigma factor SigH and, in conjunction with SigH, binds to an auxiliary promoter upstream of mec-cysO-cysM, leading to the transcriptional activation of these genes encoding a non-canonical actinomycete-specific cysteine biosynthesis pathway. Increased transcription of mec-cysO-cysM results in enhanced production of L-cysteine and cysteine-derived antioxidant molecules. Increased production of cysteine protects mycobacteria cells from host phagocyte-derived oxidative and nitrosative stress, thus facilitating the mycobacterial growth in the host. This chain is Oxidative stress regulator AosR, found in Mycobacterium bovis (strain ATCC BAA-935 / AF2122/97).